A 189-amino-acid chain; its full sequence is MKMLVDFLPIALFFAVYHLSDDILLATLVLIPATLAQVAFVWWRYRRVEKMQLITLALVVVMGGATVIFHDAAFIQWKPTVVNWLFAFAFLVAPLFGGKTLIERMMGKAIALPAATWRRLNLAWVAFFIALGAINVYVFKTYDEATWVNFKLFGMLGLTLLFVLGQGVYLARHMPRDTLSQNDHQKDDV.

A run of 5 helical transmembrane segments spans residues 23 to 43 (ILLATLVLIPATLAQVAFVWW), 54 to 74 (ITLALVVVMGGATVIFHDAAF), 82 to 102 (VNWLFAFAFLVAPLFGGKTLI), 120 to 140 (LNLAWVAFFIALGAINVYVFK), and 150 to 170 (FKLFGMLGLTLLFVLGQGVYL).

It belongs to the YciB family.

The protein localises to the cell inner membrane. Plays a role in cell envelope biogenesis, maintenance of cell envelope integrity and membrane homeostasis. The protein is Inner membrane-spanning protein YciB of Chromohalobacter salexigens (strain ATCC BAA-138 / DSM 3043 / CIP 106854 / NCIMB 13768 / 1H11).